Consider the following 1252-residue polypeptide: DNA-directed RNA polymerase subunit beta (1252 aa).

This sequence belongs to the RNA polymerase beta chain family. The RNAP catalytic core consists of 2 alpha, 1 beta, 1 beta' and 1 omega subunit. When a sigma factor is associated with the core the holoenzyme is formed, which can initiate transcription.

The catalysed reaction is RNA(n) + a ribonucleoside 5'-triphosphate = RNA(n+1) + diphosphate. DNA-dependent RNA polymerase catalyzes the transcription of DNA into RNA using the four ribonucleoside triphosphates as substrates. This Chlamydia abortus (strain DSM 27085 / S26/3) (Chlamydophila abortus) protein is DNA-directed RNA polymerase subunit beta.